The primary structure comprises 101 residues: Small ribosomal subunit protein uS14 (101 aa).

This sequence belongs to the universal ribosomal protein uS14 family. In terms of assembly, part of the 30S ribosomal subunit. Contacts proteins S3 and S10.

Binds 16S rRNA, required for the assembly of 30S particles and may also be responsible for determining the conformation of the 16S rRNA at the A site. This Enterobacter sp. (strain 638) protein is Small ribosomal subunit protein uS14.